The sequence spans 399 residues: ATP phosphoribosyltransferase regulatory subunit (399 aa).

Belongs to the class-II aminoacyl-tRNA synthetase family. HisZ subfamily. Heteromultimer composed of HisG and HisZ subunits.

It is found in the cytoplasm. It participates in amino-acid biosynthesis; L-histidine biosynthesis; L-histidine from 5-phospho-alpha-D-ribose 1-diphosphate: step 1/9. Functionally, required for the first step of histidine biosynthesis. May allow the feedback regulation of ATP phosphoribosyltransferase activity by histidine. In Symbiobacterium thermophilum (strain DSM 24528 / JCM 14929 / IAM 14863 / T), this protein is ATP phosphoribosyltransferase regulatory subunit.